Reading from the N-terminus, the 223-residue chain is Fibroblast growth factor-binding protein 2 (223 aa).

A signal peptide spans 1-19 (MKFVPCLLLVTLSCLGTLG). Residues 23-45 (RQKQGSTGEEFHFQTGGRDSCTM) form a disordered region. Disulfide bonds link C43–C63, C72–C106, and C81–C117. The disordered stretch occupies residues 120–201 (AGPQAHMQQV…PGGNEEAKKK (82 aa)). Over residues 125–144 (HMQQVTSSLKGSPEPNQQPE) the composition is skewed to polar residues. Positions 175 to 186 (AKPTTRPTAKPT) are enriched in low complexity. A disulfide bond links C206 and C214.

The protein belongs to the fibroblast growth factor-binding protein family. Expressed in serum, peripheral leukocytes and cytotoxic T-lymphocytes, but not in granulocytes and monocytes (at protein level).

The protein localises to the secreted. Its subcellular location is the extracellular space. The polypeptide is Fibroblast growth factor-binding protein 2 (FGFBP2) (Homo sapiens (Human)).